A 352-amino-acid polypeptide reads, in one-letter code: MKEQLNQLSAYQPGLSPRALKEKYGIEGDLYKLASNENLYGPSPKVKEAISAHLDELYYYPETGSPTLKAAISKHLNVDQSRILFGAGLDEVILMISRAVLTPGDTIVTSEATFGQYYHNAIVESANVIQVPLKDGGFDLEGILKEVNEDTSLVWLCNPNNPTGTYFNHESLDSFLSQVPPHVPVIIDEAYFEFVTEEDYPDTLALQQKYDNAFLLRTFSKAYGLAGLRVGYVVASEHAIEKWNIIRPPFNVTRISEYAAVAALEDQQYLKEVTHKNSVERERFYQLPQSEYFLPSQTNFIFVKTKRVNELYEALLNVGCITRPFPTGVRITIGFKEQNDKMLEVLSNFKYE.

The residue at position 221 (lysine 221) is an N6-(pyridoxal phosphate)lysine.

It belongs to the class-II pyridoxal-phosphate-dependent aminotransferase family. Histidinol-phosphate aminotransferase subfamily. As to quaternary structure, homodimer. Pyridoxal 5'-phosphate serves as cofactor.

It catalyses the reaction L-histidinol phosphate + 2-oxoglutarate = 3-(imidazol-4-yl)-2-oxopropyl phosphate + L-glutamate. The protein operates within amino-acid biosynthesis; L-histidine biosynthesis; L-histidine from 5-phospho-alpha-D-ribose 1-diphosphate: step 7/9. This Staphylococcus aureus (strain MSSA476) protein is Histidinol-phosphate aminotransferase.